Reading from the N-terminus, the 363-residue chain is Probable butyrate kinase (363 aa).

The protein belongs to the acetokinase family.

It is found in the cytoplasm. The enzyme catalyses butanoate + ATP = butanoyl phosphate + ADP. This chain is Probable butyrate kinase, found in Maridesulfovibrio salexigens (strain ATCC 14822 / DSM 2638 / NCIMB 8403 / VKM B-1763) (Desulfovibrio salexigens).